A 329-amino-acid chain; its full sequence is MAFLKTLNPLLRRSPTPIPNPRSLLSLDAFLAASSPTAASHATAPAPFAAAAHHHVPIRSGGPLFLSSPPWMLSQSATPLTAAAAALRARLRRARALAGGGAQAVADAVGWEPRRISRDESEVAEAVTGGRERFLNLPNLVSIGRMASGPVIGWMIVNEWYLPAFGTLALSGASDWLDGFLARKMGINSVFGSYLDPLADKVLIGCVAIAMVEKDLLHPGLVGLVVVRDLLLVGGAVYKRASSLGWKWNSWSDFVNLDAIHREKVKPLFISKVNTVFQLMLVAAALLQPEFGTEETQNYITVLSWLVASTTIASTVGYGIKYRQIRPRR.

The transit peptide at 1–38 (MAFLKTLNPLLRRSPTPIPNPRSLLSLDAFLAASSPTA) directs the protein to the chloroplast. 4 helical membrane-spanning segments follow: residues 150 to 170 (PVIG…TLAL), 190 to 210 (VFGS…VAIA), 217 to 237 (LHPG…GGAV), and 300 to 320 (ITVL…GYGI).

The protein belongs to the CDP-alcohol phosphatidyltransferase class-I family. It depends on Mn(2+) as a cofactor.

The protein localises to the plastid. It localises to the chloroplast membrane. It catalyses the reaction a CDP-1,2-diacyl-sn-glycerol + sn-glycerol 3-phosphate = a 1,2-diacyl-sn-glycero-3-phospho-(1'-sn-glycero-3'-phosphate) + CMP + H(+). It functions in the pathway phospholipid metabolism; phosphatidylglycerol biosynthesis; phosphatidylglycerol from CDP-diacylglycerol: step 1/2. Functionally, catalyzes the committed step to the synthesis of the acidic phospholipids. Transfers specifically a phosphatidyl group from CDP-diacylglycerol to glycerol-3-phosphate to form phosphatidylglycerophosphate. The chain is CDP-diacylglycerol--glycerol-3-phosphate 3-phosphatidyltransferase 1, chloroplastic from Oryza sativa subsp. japonica (Rice).